We begin with the raw amino-acid sequence, 144 residues long: Large ribosomal subunit protein uL15 (144 aa).

Residues 1–57 are disordered; that stretch reads MLLNTLSPAAGSKHAPKRLGRGVGSGLGKTGGRGHKGQKSRSGGKVRPGFEGGQMPL. A compositionally biased stretch (gly residues) spans 21–31; sequence RGVGSGLGKTG. A compositionally biased stretch (basic residues) spans 32 to 44; it reads GRGHKGQKSRSGG.

The protein belongs to the universal ribosomal protein uL15 family. In terms of assembly, part of the 50S ribosomal subunit.

Functionally, binds to the 23S rRNA. The sequence is that of Large ribosomal subunit protein uL15 from Vibrio cholerae serotype O1 (strain ATCC 39315 / El Tor Inaba N16961).